The following is a 400-amino-acid chain: Serine/threonine transporter SstT (400 aa).

A run of 10 helical transmembrane segments spans residues 11–31 (IGLVPLIIIGLVLGVLIGWLA), 45–65 (FVGALKAVAPILVFVLVMAAI), 81–101 (IMYMFGTFLAALTAVGASFLF), 138–158 (AIAEANYIGILAWAIIIGFAL), 175–195 (AISQVVKWVIALAPFGILGLV), 213–233 (ILMVLVGCMLFIALVVNPLII), 242–264 (YPLVFICLRESGITAFFTRSSAA), 295–315 (MAGAAITINVLTLAAAHTLGI), 327–347 (LVATISACGASGVAGGSLLLI), and 354–374 (FSIPNDIAMQVVAIGFIIGVI).

This sequence belongs to the dicarboxylate/amino acid:cation symporter (DAACS) (TC 2.A.23) family.

The protein resides in the cell inner membrane. The enzyme catalyses L-serine(in) + Na(+)(in) = L-serine(out) + Na(+)(out). The catalysed reaction is L-threonine(in) + Na(+)(in) = L-threonine(out) + Na(+)(out). Functionally, involved in the import of serine and threonine into the cell, with the concomitant import of sodium (symport system). This chain is Serine/threonine transporter SstT, found in Psychrobacter cryohalolentis (strain ATCC BAA-1226 / DSM 17306 / VKM B-2378 / K5).